A 148-amino-acid polypeptide reads, in one-letter code: uncharacterized protein (148 aa).

Residues 1–18 (MKIILTVLAGVGLLSAGG) form the signal peptide. Residue Cys19 is the site of N-palmitoyl cysteine attachment. Cys19 carries the S-diacylglycerol cysteine lipid modification.

It localises to the cell membrane. This is an uncharacterized protein from Bacillus subtilis (strain 168).